Reading from the N-terminus, the 230-residue chain is Interleukin-22 receptor subunit alpha-2 (230 aa).

The first 20 residues, 1–20, serve as a signal peptide directing secretion; the sequence is MMPKHCLLGLLIILLSSATE. Fibronectin type-III domains lie at 29–128 and 129–230; these read TPQK…TKLD and PPVV…VHIP. 2 disulfides stabilise this stretch: Cys77/Cys85 and Cys205/Cys226.

The protein belongs to the type II cytokine receptor family. As to expression, highly expressed in lymph nodes and at lower levels in lung, spleen, and thymus. Not expressed in kidney, liver and heart.

The protein resides in the secreted. In terms of biological role, receptor for IL22. Binds to IL22, prevents interaction with the functional IL-22R complex and blocks the activity of IL22 (in vitro). May play an important role as an IL22 antagonist in the regulation of inflammatory responses. This chain is Interleukin-22 receptor subunit alpha-2 (Il22ra2), found in Mus musculus (Mouse).